The chain runs to 389 residues: Probable nitrate transporter NarT (389 aa).

12 consecutive transmembrane segments (helical) span residues 14 to 34, 45 to 65, 69 to 89, 97 to 117, 139 to 159, 161 to 181, 211 to 231, 246 to 266, 268 to 288, 294 to 314, 331 to 351, and 353 to 373; these read TLSL…MPFI, ISII…PFGY, IVGA…PIFF, GMLM…SVGV, GNIG…IIGW, TTVR…FIFG, WYFI…NYLV, GVFI…GDKF, AVKV…ILGI, LFTV…GLIF, IVSM…TYVA, and LTGS…IALF.

The protein belongs to the major facilitator superfamily. Nitrate/nitrite porter (TC 2.A.1.8) family.

The protein resides in the cell membrane. Probably required for nitrate uptake under anoxic conditions. Also possibly involved in excretion of nitrite produced by the dissimilatory reduction of nitrate. This is Probable nitrate transporter NarT (narT) from Staphylococcus aureus (strain USA300).